Reading from the N-terminus, the 78-residue chain is MSDTVERVKKIIVEHLGVNADKVVENASFIDDLGADSLDTVELVMAFEEEFGVEIPDEAAETIFTVGDAVKFIDKASA.

The region spanning 2–77 is the Carrier domain; sequence SDTVERVKKI…DAVKFIDKAS (76 aa). Serine 37 carries the post-translational modification O-(pantetheine 4'-phosphoryl)serine.

The protein belongs to the acyl carrier protein (ACP) family. Post-translationally, 4'-phosphopantetheine is transferred from CoA to a specific serine of apo-ACP by AcpS. This modification is essential for activity because fatty acids are bound in thioester linkage to the sulfhydryl of the prosthetic group.

The protein resides in the cytoplasm. It functions in the pathway lipid metabolism; fatty acid biosynthesis. Functionally, carrier of the growing fatty acid chain in fatty acid biosynthesis. The protein is Acyl carrier protein of Bartonella quintana (strain Toulouse) (Rochalimaea quintana).